A 274-amino-acid polypeptide reads, in one-letter code: Large ribosomal subunit protein uL2 (274 aa).

2 disordered regions span residues 35 to 55 (FGKK…RHRG) and 224 to 274 (AMNP…KLKG). Over residues 45 to 55 (NHGRITTRHRG) the composition is skewed to basic residues. Positions 263–274 (KSSDKYIKKLKG) are enriched in basic and acidic residues.

The protein belongs to the universal ribosomal protein uL2 family. As to quaternary structure, part of the 50S ribosomal subunit. Forms a bridge to the 30S subunit in the 70S ribosome.

In terms of biological role, one of the primary rRNA binding proteins. Required for association of the 30S and 50S subunits to form the 70S ribosome, for tRNA binding and peptide bond formation. It has been suggested to have peptidyltransferase activity; this is somewhat controversial. Makes several contacts with the 16S rRNA in the 70S ribosome. In Wolbachia pipientis subsp. Culex pipiens (strain wPip), this protein is Large ribosomal subunit protein uL2.